The following is a 468-amino-acid chain: Putative amidase AmiC (468 aa).

Catalysis depends on charge relay system residues K80 and S155. The active-site Acyl-ester intermediate is the S179.

Belongs to the amidase family.

The catalysed reaction is a monocarboxylic acid amide + H2O = a monocarboxylate + NH4(+). The sequence is that of Putative amidase AmiC (amiC) from Mycobacterium leprae (strain TN).